We begin with the raw amino-acid sequence, 196 residues long: Probable inactive nicotinamidase At3g16190 (196 aa).

Belongs to the isochorismatase family.

Does not possess nicotinamidase activity in vitro. This chain is Probable inactive nicotinamidase At3g16190, found in Arabidopsis thaliana (Mouse-ear cress).